The primary structure comprises 199 residues: Glycerol-3-phosphate acyltransferase (199 aa).

The next 5 membrane-spanning stretches (helical) occupy residues 3–23 (AAVW…GVLV), 50–70 (WGPA…AVLV), 78–98 (DWML…SVFL), 113–133 (LLFL…SVIL), and 154–174 (LALG…LLIF).

Belongs to the PlsY family. Probably interacts with PlsX.

Its subcellular location is the cell inner membrane. The enzyme catalyses an acyl phosphate + sn-glycerol 3-phosphate = a 1-acyl-sn-glycero-3-phosphate + phosphate. It functions in the pathway lipid metabolism; phospholipid metabolism. Catalyzes the transfer of an acyl group from acyl-phosphate (acyl-PO(4)) to glycerol-3-phosphate (G3P) to form lysophosphatidic acid (LPA). This enzyme utilizes acyl-phosphate as fatty acyl donor, but not acyl-CoA or acyl-ACP. The protein is Glycerol-3-phosphate acyltransferase of Thermus thermophilus (strain ATCC 27634 / DSM 579 / HB8).